Consider the following 406-residue polypeptide: Large ribosomal subunit protein uL4z (406 aa).

Residues 56–95 are disordered; that stretch reads PYAVSKKAGHQTSAESWGTGRAVSRIPRVPGGGTHRAGQA.

Belongs to the universal ribosomal protein uL4 family.

This is Large ribosomal subunit protein uL4z (RPL4A) from Arabidopsis thaliana (Mouse-ear cress).